The following is a 282-amino-acid chain: Phosphatidylglycerol--prolipoprotein diacylglyceryl transferase (282 aa).

3 helical membrane passes run 18 to 38 (IQVH…VALA), 56 to 76 (ILWA…IFQW), and 89 to 109 (IWDG…VVIL). Arg137 provides a ligand contact to a 1,2-diacyl-sn-glycero-3-phospho-(1'-sn-glycerol). A helical membrane pass occupies residues 237–257 (VIRVSQALSVVLFFGSIGLMI).

Belongs to the Lgt family.

The protein localises to the cell membrane. The catalysed reaction is L-cysteinyl-[prolipoprotein] + a 1,2-diacyl-sn-glycero-3-phospho-(1'-sn-glycerol) = an S-1,2-diacyl-sn-glyceryl-L-cysteinyl-[prolipoprotein] + sn-glycerol 1-phosphate + H(+). The protein operates within protein modification; lipoprotein biosynthesis (diacylglyceryl transfer). In terms of biological role, catalyzes the transfer of the diacylglyceryl group from phosphatidylglycerol to the sulfhydryl group of the N-terminal cysteine of a prolipoprotein, the first step in the formation of mature lipoproteins. This is Phosphatidylglycerol--prolipoprotein diacylglyceryl transferase from Lactiplantibacillus plantarum (strain ATCC BAA-793 / NCIMB 8826 / WCFS1) (Lactobacillus plantarum).